The primary structure comprises 348 residues: Zinc finger and SCAN domain-containing protein 16 (348 aa).

Residues 41-123 (RQHFRKLCYQ…TVLEDLEREL (83 aa)) form the SCAN box domain. 2 disordered regions span residues 160–184 (PKKT…TKNE) and 205–226 (RLNK…EGRS). Over residues 163–184 (TQLEQEAGKPQRNGDKTRTKNE) the composition is skewed to basic and acidic residues. 4 C2H2-type zinc fingers span residues 236-258 (YKCD…RRTH), 264-286 (YKCD…HRVH), 292-314 (YKCK…QRIH), and 320-342 (YECD…QRIH).

Belongs to the krueppel C2H2-type zinc-finger protein family.

The protein localises to the nucleus. May be involved in transcriptional regulation. This is Zinc finger and SCAN domain-containing protein 16 (ZSCAN16) from Homo sapiens (Human).